A 1575-amino-acid polypeptide reads, in one-letter code: Lysophospholipase NTE1 (1575 aa).

The interval 1–56 (MNLTTTMPAAVAPDPPAQLAVSSRSLSDSSDAAGASRTSSSCRASSPSHCPTHAWN) is disordered. The Cytoplasmic portion of the chain corresponds to 1 to 99 (MNLTTTMPAA…TLSPPNLLQG (99 aa)). Over residues 19–48 (LAVSSRSLSDSSDAAGASRTSSSCRASSPS) the composition is skewed to low complexity. Residues 100-120 (IVSQLAMASYIGRLLLYLFQV) traverse the membrane as a helical segment. Topologically, residues 121–151 (VPSLLYWAITFTTITVPTALFTLFSMSLTFT) are lumenal. A helical transmembrane segment spans residues 152–172 (MNFTTLLIIVLLLVSTVSWFI). At 173–1575 (RYRFLNIYSR…RTMAPRRASI (1403 aa)) the chain is on the cytoplasmic side. 2 disordered regions span residues 339 to 425 (DMES…AKSV) and 568 to 587 (GSAS…VSPG). The span at 409-424 (RGHRRKRPSRPKRAKS) shows a compositional bias: basic residues. A nucleoside 3',5'-cyclic phosphate-binding positions include 737 to 856 (GGTS…TSYR) and 894 to 1014 (RLTT…IAQR). One can recognise a PNPLA domain in the interval 1272–1436 (LVLGGGGARG…VDNLTVARMK (165 aa)). The GXGXXG motif lies at 1276-1281 (GGGARG). Residues 1303–1307 (GTSIG) carry the GXSXG motif. The active-site Nucleophile is serine 1305. Catalysis depends on aspartate 1423, which acts as the Proton acceptor. A DGA/G motif is present at residues 1423–1425 (DGG).

It belongs to the NTE family.

It localises to the endoplasmic reticulum membrane. It carries out the reaction a 1-acyl-sn-glycero-3-phosphocholine + H2O = sn-glycerol 3-phosphocholine + a fatty acid + H(+). Inhibited by organophosphorus esters. Functionally, intracellular phospholipase B that catalyzes the double deacylation of phosphatidylcholine (PC) to glycerophosphocholine (GroPCho). Plays an important role in membrane lipid homeostasis. Responsible for the rapid PC turnover in response to inositol, elevated temperatures, or when choline is present in the growth medium. The polypeptide is Lysophospholipase NTE1 (NTE1) (Coccidioides immitis (strain RS) (Valley fever fungus)).